A 640-amino-acid chain; its full sequence is Threonine--tRNA ligase (640 aa).

Residues 1–61 enclose the TGS domain; that stretch reads MPIITLPDGN…EKDSEVNIIT (61 aa). Positions 242–533 are catalytic; it reads DHRRIAKQMS…LIEHYAGRMP (292 aa). Cys333, His384, and His510 together coordinate Zn(2+).

The protein belongs to the class-II aminoacyl-tRNA synthetase family. In terms of assembly, homodimer. Zn(2+) is required as a cofactor.

The protein resides in the cytoplasm. The enzyme catalyses tRNA(Thr) + L-threonine + ATP = L-threonyl-tRNA(Thr) + AMP + diphosphate + H(+). In terms of biological role, catalyzes the attachment of threonine to tRNA(Thr) in a two-step reaction: L-threonine is first activated by ATP to form Thr-AMP and then transferred to the acceptor end of tRNA(Thr). Also edits incorrectly charged L-seryl-tRNA(Thr). This Prochlorococcus marinus (strain MIT 9303) protein is Threonine--tRNA ligase.